The primary structure comprises 235 residues: Urease accessory protein UreF (235 aa).

It belongs to the UreF family. As to quaternary structure, ureD, UreF and UreG form a complex that acts as a GTP-hydrolysis-dependent molecular chaperone, activating the urease apoprotein by helping to assemble the nickel containing metallocenter of UreC. The UreE protein probably delivers the nickel.

The protein localises to the cytoplasm. Functionally, required for maturation of urease via the functional incorporation of the urease nickel metallocenter. This is Urease accessory protein UreF from Pseudoalteromonas translucida (strain TAC 125).